The following is a 491-amino-acid chain: Glutamyl-tRNA(Gln) amidotransferase subunit A (491 aa).

Active-site charge relay system residues include K78 and S158. The active-site Acyl-ester intermediate is the S182.

The protein belongs to the amidase family. GatA subfamily. Heterotrimer of A, B and C subunits.

It carries out the reaction L-glutamyl-tRNA(Gln) + L-glutamine + ATP + H2O = L-glutaminyl-tRNA(Gln) + L-glutamate + ADP + phosphate + H(+). Its function is as follows. Allows the formation of correctly charged Gln-tRNA(Gln) through the transamidation of misacylated Glu-tRNA(Gln) in organisms which lack glutaminyl-tRNA synthetase. The reaction takes place in the presence of glutamine and ATP through an activated gamma-phospho-Glu-tRNA(Gln). The chain is Glutamyl-tRNA(Gln) amidotransferase subunit A from Nitrobacter hamburgensis (strain DSM 10229 / NCIMB 13809 / X14).